We begin with the raw amino-acid sequence, 488 residues long: UDP-N-acetylmuramate--L-alanine ligase (488 aa).

122-128 (GTHGKTT) contacts ATP.

This sequence belongs to the MurCDEF family.

The protein resides in the cytoplasm. The catalysed reaction is UDP-N-acetyl-alpha-D-muramate + L-alanine + ATP = UDP-N-acetyl-alpha-D-muramoyl-L-alanine + ADP + phosphate + H(+). Its pathway is cell wall biogenesis; peptidoglycan biosynthesis. Cell wall formation. The chain is UDP-N-acetylmuramate--L-alanine ligase from Mycobacterium marinum (strain ATCC BAA-535 / M).